A 222-amino-acid polypeptide reads, in one-letter code: Chromatin-associated protein SWI6 (222 aa).

A compositionally biased stretch (basic and acidic residues) spans 1-15 (MPVIKKEELSQKKDL). 2 disordered regions span residues 1 to 26 (MPVI…GLED) and 77 to 147 (ETQD…DRQY). Over residues 16–26 (ESEEEDSGLED) the composition is skewed to acidic residues. A Chromo domain is found at 28 to 87 (YEVEKVIKHRGKGKNIEFLVRWKGYGPEYDTWEPTENVASAEEAVAAYWETQDKTATAPR).

Interacts with DMT5.

It is found in the nucleus. Its function is as follows. Recognizes and binds histone H3 tails methylated at 'Lys-9', leading to epigenetic repression. Localizes DMT5 to heterochromatin characterized by trimethylation of histone H3 tails at 'Lys-9'. The polypeptide is Chromatin-associated protein SWI6 (Cryptococcus neoformans var. grubii serotype A (strain H99 / ATCC 208821 / CBS 10515 / FGSC 9487) (Filobasidiella neoformans var. grubii)).